The sequence spans 60 residues: Cytotoxin 3 (60 aa).

Intrachain disulfides connect Cys-3/Cys-21, Cys-14/Cys-38, Cys-42/Cys-53, and Cys-54/Cys-59.

It belongs to the three-finger toxin family. Short-chain subfamily. Type IA cytotoxin sub-subfamily. As to quaternary structure, monomer in solution; Homodimer and oligomer in the presence of negatively charged lipids forming a pore with a size ranging between 20 and 30 Angstroms. Expressed by the venom gland.

It is found in the secreted. It localises to the target cell membrane. In terms of biological role, shows cytolytic activity on many different cells by forming pore in lipid membranes. In vivo, increases heart rate or kills the animal by cardiac arrest. In addition, it binds to heparin with high affinity, interacts with Kv channel-interacting protein 1 (KCNIP1) in a calcium-independent manner, and binds to integrin alpha-V/beta-3 (ITGAV/ITGB3) with moderate affinity. The protein is Cytotoxin 3 of Naja mossambica (Mozambique spitting cobra).